Here is a 209-residue protein sequence, read N- to C-terminus: Mitochondrial import inner membrane translocase subunit Tim23 (209 aa).

A run of 3 helical transmembrane segments spans residues 73 to 93 (FELA…FGAM), 125 to 145 (ALWA…GVII), and 181 to 197 (GLTG…YNNW).

It belongs to the Tim17/Tim22/Tim23 family. In terms of assembly, component of the TIM23 complex at least composed of TIMM23, TIMM17 (TIMM17A or TIMM17B) and TIMM50; within this complex, directly interacts with TIMM50. The complex interacts with the TIMM44 component of the PAM complex and with DNAJC15. Upon mitochondrial depolarization, interacts with PINK1; the interaction is required for PINK1 accumulation at the outer mitochondrial membrane, kinase activation by autophosphorylation and PRKN recruitement to mitochondria.

It is found in the mitochondrion inner membrane. Functionally, essential component of the TIM23 complex, a complex that mediates the translocation of transit peptide-containing proteins across the mitochondrial inner membrane. Has a role in the activation of stress-induced mitophagy by protecting PINK1 from OMA1-mediated degradation and facilitating its accumulation at the outer mitochondrial membrane in response to depolarization. In Homo sapiens (Human), this protein is Mitochondrial import inner membrane translocase subunit Tim23 (TIMM23).